We begin with the raw amino-acid sequence, 323 residues long: tRNA-dihydrouridine(16) synthase (323 aa).

Residues 7–9 (PME) and Gln68 contribute to the FMN site. Cys98 acts as the Proton donor in catalysis. FMN contacts are provided by residues Lys139, 200-202 (NGE), and 224-225 (CR).

This sequence belongs to the Dus family. DusC subfamily. FMN serves as cofactor.

The catalysed reaction is 5,6-dihydrouridine(16) in tRNA + NADP(+) = uridine(16) in tRNA + NADPH + H(+). It catalyses the reaction 5,6-dihydrouridine(16) in tRNA + NAD(+) = uridine(16) in tRNA + NADH + H(+). Its function is as follows. Catalyzes the synthesis of 5,6-dihydrouridine (D), a modified base found in the D-loop of most tRNAs, via the reduction of the C5-C6 double bond in target uridines. Specifically modifies U16 in tRNAs. The chain is tRNA-dihydrouridine(16) synthase from Vibrio cholerae serotype O1 (strain ATCC 39315 / El Tor Inaba N16961).